The sequence spans 116 residues: Large ribosomal subunit protein bL19 (116 aa).

The protein belongs to the bacterial ribosomal protein bL19 family.

Its function is as follows. This protein is located at the 30S-50S ribosomal subunit interface and may play a role in the structure and function of the aminoacyl-tRNA binding site. This is Large ribosomal subunit protein bL19 from Chloroflexus aggregans (strain MD-66 / DSM 9485).